We begin with the raw amino-acid sequence, 215 residues long: Adenylate kinase (215 aa).

Residue 10-15 coordinates ATP; it reads GAGKGT. Positions 30–59 are NMP; the sequence is STGDMFRAAIKDQTPLGQEAKSYMDKGELV. Residues T31, R36, 57 to 59, 85 to 88, and Q92 each bind AMP; these read ELV and GFPR. The LID stretch occupies residues 126–163; the sequence is GRRICPTCGATYHVIYNPPKVEGVCDIDGSALVQREDD. An ATP-binding site is contributed by R127. Residues C130 and C133 each contribute to the Zn(2+) site. Residue 136 to 137 participates in ATP binding; that stretch reads TY. Zn(2+) contacts are provided by C150 and D153. The AMP site is built by R160 and R171. An ATP-binding site is contributed by R199.

This sequence belongs to the adenylate kinase family. In terms of assembly, monomer.

The protein localises to the cytoplasm. The catalysed reaction is AMP + ATP = 2 ADP. It participates in purine metabolism; AMP biosynthesis via salvage pathway; AMP from ADP: step 1/1. Catalyzes the reversible transfer of the terminal phosphate group between ATP and AMP. Plays an important role in cellular energy homeostasis and in adenine nucleotide metabolism. The protein is Adenylate kinase of Exiguobacterium sibiricum (strain DSM 17290 / CCUG 55495 / CIP 109462 / JCM 13490 / 255-15).